A 494-amino-acid polypeptide reads, in one-letter code: GDP-fucose protein O-fucosyltransferase 4 (494 aa).

At 1–7 the chain is on the cytoplasmic side; the sequence is MAARYTE. A helical; Signal-anchor for type II membrane protein transmembrane segment spans residues 8–24; sequence AVLAALGVLSVCSASSS. The Lumenal portion of the chain corresponds to 25 to 494; it reads SGSGASGKAG…EIFMKRNKNL (470 aa). Residue asparagine 167 is glycosylated (N-linked (GlcNAc...) asparagine). A disulfide bridge connects residues cysteine 390 and cysteine 393.

Belongs to the glycosyltransferase 10 family.

Its subcellular location is the endoplasmic reticulum membrane. It carries out the reaction L-threonyl-[protein] + GDP-beta-L-fucose = 3-O-(alpha-L-fucosyl)-L-threonyl-[protein] + GDP + H(+). The catalysed reaction is L-seryl-[protein] + GDP-beta-L-fucose = 3-O-(alpha-L-fucosyl)-L-seryl-[protein] + GDP + H(+). It functions in the pathway protein modification; protein glycosylation. Its function is as follows. Protein O-fucosyltransferase that specifically catalyzes O-fucosylation of serine or threonine residues in EMI domains of target proteins, such as MMRN1, MMRN2 and EMID1. Attaches fucose through an O-glycosidic linkage. O-fucosylation of EMI domain-containing proteins may be required for facilitating protein folding and secretion. Also shows minor alpha-(1,3)-fucosyltransferase activity toward activity toward biantennary N-glycan acceptors. However, this was tested with a library of synthetic substrates and this activity is unsure in vivo. In Rattus norvegicus (Rat), this protein is GDP-fucose protein O-fucosyltransferase 4 (Fut11).